A 710-amino-acid chain; its full sequence is NAD(P)H-quinone oxidoreductase subunit 5, chloroplastic (710 aa).

17 consecutive transmembrane segments (helical) span residues 9 to 29 (WIIP…LLIF), 40 to 60 (WSFQ…YLSI), 89 to 109 (IDPL…LVLI), 125 to 145 (FTYM…SNFI), 147 to 167 (IYIF…FWFT), 185 to 205 (GDFG…SFEF), 221 to 241 (VNLL…IAKS), 258 to 278 (TPIS…FLVA), 280 to 300 (LLPL…IGII), 327 to 347 (LGYM…FHLI), 354 to 374 (ALLF…IGYS), 396 to 416 (GAFL…CFWS), 425 to 445 (WLYS…TAFY), 519 to 539 (MLFP…LGIP), 571 to 591 (FLKH…IAFL), 657 to 676 (SFDL…LSFI), and 689 to 709 (IPFY…LFYK).

Belongs to the complex I subunit 5 family. NDH is composed of at least 16 different subunits, 5 of which are encoded in the nucleus.

Its subcellular location is the plastid. It localises to the chloroplast thylakoid membrane. It carries out the reaction a plastoquinone + NADH + (n+1) H(+)(in) = a plastoquinol + NAD(+) + n H(+)(out). It catalyses the reaction a plastoquinone + NADPH + (n+1) H(+)(in) = a plastoquinol + NADP(+) + n H(+)(out). Functionally, NDH shuttles electrons from NAD(P)H:plastoquinone, via FMN and iron-sulfur (Fe-S) centers, to quinones in the photosynthetic chain and possibly in a chloroplast respiratory chain. The immediate electron acceptor for the enzyme in this species is believed to be plastoquinone. Couples the redox reaction to proton translocation, and thus conserves the redox energy in a proton gradient. This Ipomoea purpurea (Common morning glory) protein is NAD(P)H-quinone oxidoreductase subunit 5, chloroplastic (ndhF).